Consider the following 277-residue polypeptide: Protein HEAT-INDUCED TAS1 TARGET 1 (277 aa).

This sequence belongs to the heat induced plant HTT protein family. In terms of assembly, interacts with the heat shock proteins HSP70-14 and At2g33735/HSP40, and with NFYC2 in both cytoplasm and nucleus. As to expression, expressed ubiquitously, including in seedlings, leaves, stems, inflorescences and siliques.

The protein localises to the cytoplasm. It localises to the nucleus. Its function is as follows. Mediates both basal and acquired thermotolerance via HSFA1s-directed pathways (e.g. HSFA1A, HSFA1B, and HSFA1D). Triggers the expression of HSFA1A and HSFA1B. The chain is Protein HEAT-INDUCED TAS1 TARGET 1 from Arabidopsis thaliana (Mouse-ear cress).